The chain runs to 1035 residues: Glycine dehydrogenase (decarboxylating), mitochondrial (1035 aa).

Residues 1-64 constitute a mitochondrion transit peptide; it reads MERARKLANR…KSFNTQQARS (64 aa). An N6-(pyridoxal phosphate)lysine modification is found at K771.

It belongs to the GcvP family. In terms of assembly, homodimer. The glycine cleavage system is composed of four proteins: P, T, L and H. The cofactor is pyridoxal 5'-phosphate.

It is found in the mitochondrion. The enzyme catalyses N(6)-[(R)-lipoyl]-L-lysyl-[glycine-cleavage complex H protein] + glycine + H(+) = N(6)-[(R)-S(8)-aminomethyldihydrolipoyl]-L-lysyl-[glycine-cleavage complex H protein] + CO2. The glycine cleavage system catalyzes the degradation of glycine. The P protein binds the alpha-amino group of glycine through its pyridoxal phosphate cofactor; CO(2) is released and the remaining methylamine moiety is then transferred to the lipoamide cofactor of the H protein. The chain is Glycine dehydrogenase (decarboxylating), mitochondrial (GDCSP) from Solanum tuberosum (Potato).